The chain runs to 161 residues: Peroxynitrite isomerase 1 (161 aa).

The short motif at 17 to 23 is the GXWXGXG element; the sequence is GTWTGRG. H152 is a binding site for heme b.

The protein belongs to the nitrobindin family. Homodimer. Heme b serves as cofactor.

The catalysed reaction is peroxynitrite = nitrate. It participates in nitrogen metabolism. Heme-binding protein able to scavenge peroxynitrite and to protect free L-tyrosine against peroxynitrite-mediated nitration, by acting as a peroxynitrite isomerase that converts peroxynitrite to nitrate. Therefore, this protein likely plays a role in peroxynitrite sensing and in the detoxification of reactive nitrogen and oxygen species (RNS and ROS, respectively). Is able to bind nitric oxide (NO) in vitro, but may act as a sensor of peroxynitrite levels in vivo. In Mycolicibacterium paratuberculosis (strain ATCC BAA-968 / K-10) (Mycobacterium paratuberculosis), this protein is Peroxynitrite isomerase 1.